Here is a 431-residue protein sequence, read N- to C-terminus: Glutamate-1-semialdehyde 2,1-aminomutase (431 aa).

N6-(pyridoxal phosphate)lysine is present on Lys269.

Belongs to the class-III pyridoxal-phosphate-dependent aminotransferase family. HemL subfamily. As to quaternary structure, homodimer. Pyridoxal 5'-phosphate is required as a cofactor.

The protein localises to the cytoplasm. It carries out the reaction (S)-4-amino-5-oxopentanoate = 5-aminolevulinate. The protein operates within porphyrin-containing compound metabolism; protoporphyrin-IX biosynthesis; 5-aminolevulinate from L-glutamyl-tRNA(Glu): step 2/2. Its pathway is porphyrin-containing compound metabolism; chlorophyll biosynthesis. The protein is Glutamate-1-semialdehyde 2,1-aminomutase of Chlorobium phaeobacteroides (strain DSM 266 / SMG 266 / 2430).